Consider the following 147-residue polypeptide: Peptide methionine sulfoxide reductase MsrA (147 aa).

C10 is a catalytic residue.

Belongs to the MsrA Met sulfoxide reductase family.

The catalysed reaction is L-methionyl-[protein] + [thioredoxin]-disulfide + H2O = L-methionyl-(S)-S-oxide-[protein] + [thioredoxin]-dithiol. It carries out the reaction [thioredoxin]-disulfide + L-methionine + H2O = L-methionine (S)-S-oxide + [thioredoxin]-dithiol. Functionally, has an important function as a repair enzyme for proteins that have been inactivated by oxidation. Catalyzes the reversible oxidation-reduction of methionine sulfoxide in proteins to methionine. This chain is Peptide methionine sulfoxide reductase MsrA, found in Pelagibacter ubique (strain HTCC1062).